A 285-amino-acid chain; its full sequence is 2-dehydro-3-deoxyphosphooctonate aldolase (285 aa).

The protein belongs to the KdsA family.

Its subcellular location is the cytoplasm. It carries out the reaction D-arabinose 5-phosphate + phosphoenolpyruvate + H2O = 3-deoxy-alpha-D-manno-2-octulosonate-8-phosphate + phosphate. The protein operates within carbohydrate biosynthesis; 3-deoxy-D-manno-octulosonate biosynthesis; 3-deoxy-D-manno-octulosonate from D-ribulose 5-phosphate: step 2/3. It participates in bacterial outer membrane biogenesis; lipopolysaccharide biosynthesis. The sequence is that of 2-dehydro-3-deoxyphosphooctonate aldolase from Acinetobacter baylyi (strain ATCC 33305 / BD413 / ADP1).